Reading from the N-terminus, the 920-residue chain is Plasma membrane ATPase (920 aa).

The interval 1 to 77 is disordered; sequence MADHSASGAP…TPGGGRVVPE (77 aa). The Cytoplasmic segment spans residues 1–115; sequence MADHSASGAP…KEEKENHFLK (115 aa). Over residues 38 to 51 the composition is skewed to acidic residues; it reads EDDEDEDIDALIED. A helical transmembrane segment spans residues 116 to 138; the sequence is FLGFFVGPIQFVMEGAAVLAAGL. Topologically, residues 139–140 are extracellular; the sequence is ED. A helical transmembrane segment spans residues 141-160; that stretch reads WVDFGVICGLLLLNAVVGFV. Residues 161–291 are Cytoplasmic-facing; sequence QEFQAGSIVD…GSGHFTEVLN (131 aa). Residues 292–314 traverse the membrane as a helical segment; it reads GIGTILLILVIFTLLIVWVSSFY. The Extracellular segment spans residues 315-321; that stretch reads RSNPIVQ. Residues 322-354 traverse the membrane as a helical segment; the sequence is ILEFTLAITIIGVPVGLPAVVTTTMAVGAAYLA. Over 355 to 687 the chain is Cytoplasmic; it reads KKKAIVQKLS…LKTSRQIFHR (333 aa). Catalysis depends on D378, which acts as the 4-aspartylphosphate intermediate. Residues D634 and D638 each coordinate Mg(2+). Residues 688–713 form a helical membrane-spanning segment; the sequence is MYAYVVYRIALSIHLEIFLGLWIAIL. Residues 714–720 lie on the Extracellular side of the membrane; that stretch reads NRSLNIE. A helical transmembrane segment spans residues 721-738; sequence LVVFIAIFADVATLAIAY. Residues 739–754 are Cytoplasmic-facing; the sequence is DNAPYSQTPVKWNLPK. A helical membrane pass occupies residues 755–779; the sequence is LWGMSVLLGVVLAVGTWITVTTMYA. The Extracellular segment spans residues 780-806; sequence QGENGGIVQNFGNMDEVLFLQISLTEN. Helical transmembrane passes span 807–826 and 827–847; these read WLIFITRANGPFWSSIPSWQ and LSGAIFLVDILATCFTIWGWF. At 848 to 853 the chain is on the extracellular side; the sequence is EHSDTS. Residues 854–878 form a helical membrane-spanning segment; sequence IVAVVRIWIFSFGIFCIMGGVYYIL. The Cytoplasmic segment spans residues 879 to 920; sequence QDSVGFDNLMHGKSPKGNQKQRSLEDFVVSLQRVSTQHEKSQ.

Belongs to the cation transport ATPase (P-type) (TC 3.A.3) family. Type IIIA subfamily.

The protein localises to the cell membrane. It catalyses the reaction ATP + H2O + H(+)(in) = ADP + phosphate + 2 H(+)(out). Its function is as follows. The plasma membrane ATPase of plants and fungi is a hydrogen ion pump. The proton gradient it generates drives the active transport of nutrients by H(+)-symport. The resulting external acidification and/or internal alkinization may mediate growth responses. This Neurospora crassa (strain ATCC 24698 / 74-OR23-1A / CBS 708.71 / DSM 1257 / FGSC 987) protein is Plasma membrane ATPase (pma-1).